The sequence spans 161 residues: Arachidonate 5-lipoxygenase-activating protein (161 aa).

Topologically, residues 1–8 are lumenal; sequence MDQETVGN. A helical membrane pass occupies residues 9–30; sequence VVLLAIVTLISVVQNGFFAHKV. Over 31–52 the chain is Cytoplasmic; the sequence is EHESRTQNGRSFQRTGTLAFER. A helical transmembrane segment spans residues 53–77; that stretch reads VYTANQNCVDAYPTFLAVLWSAGLL. Topologically, residues 78-80 are lumenal; that stretch reads CSQ. Residues 81-102 traverse the membrane as a helical segment; sequence VPAAFAGLMYLLVRQKYFVGYL. Residues 103–107 lie on the Cytoplasmic side of the membrane; it reads GERTQ. An intramembrane segment occupies 108-115; the sequence is STPGYIFG. The helical transmembrane segment at 116–128 threads the bilayer; it reads KRIILFLFLMSVA. Topologically, residues 129–161 are lumenal; that stretch reads GIFNYYLIFFFGSDFENYIKTVTTTISPLLLIP.

The protein belongs to the MAPEG family. As to quaternary structure, homotrimer. Interacts with LTC4S and ALOX5.

It localises to the nucleus membrane. It is found in the endoplasmic reticulum membrane. In terms of biological role, required for leukotriene biosynthesis by ALOX5 (5-lipoxygenase). Anchors ALOX5 to the membrane. Binds arachidonic acid, and could play an essential role in the transfer of arachidonic acid to ALOX5. Binds to MK-886, a compound that blocks the biosynthesis of leukotrienes. The sequence is that of Arachidonate 5-lipoxygenase-activating protein (ALOX5AP) from Macaca fascicularis (Crab-eating macaque).